The chain runs to 504 residues: Arabinose import ATP-binding protein AraG (504 aa).

2 ABC transporter domains span residues 8-243 (LSFR…MVGR) and 256-499 (YGEE…MPKV). ATP is bound at residue 40-47 (GENGAGKS).

It belongs to the ABC transporter superfamily. Arabinose importer (TC 3.A.1.2.2) family. The complex is composed of two ATP-binding proteins (AraG), two transmembrane proteins (AraH) and a solute-binding protein (AraF).

The protein resides in the cell inner membrane. The enzyme catalyses L-arabinose(out) + ATP + H2O = L-arabinose(in) + ADP + phosphate + H(+). Its function is as follows. Part of the ABC transporter complex AraFGH involved in arabinose import. Responsible for energy coupling to the transport system. This chain is Arabinose import ATP-binding protein AraG, found in Escherichia coli O157:H7.